A 273-amino-acid chain; its full sequence is uncharacterized protein (273 aa).

It is found in the virion. This is an uncharacterized protein from Acanthamoeba polyphaga (Amoeba).